The chain runs to 583 residues: Aspartate--tRNA ligase (583 aa).

E174 contacts L-aspartate. Residues 198–201 (QITK) are aspartate. Position 220 (R220) interacts with L-aspartate. ATP is bound by residues 220 to 222 (RDE) and Q229. L-aspartate is bound at residue H443. E477 provides a ligand contact to ATP. L-aspartate is bound at residue R484. Position 529 to 532 (529 to 532 (GLDR)) interacts with ATP.

Belongs to the class-II aminoacyl-tRNA synthetase family. Type 1 subfamily. As to quaternary structure, homodimer.

It is found in the cytoplasm. It catalyses the reaction tRNA(Asp) + L-aspartate + ATP = L-aspartyl-tRNA(Asp) + AMP + diphosphate. In terms of biological role, catalyzes the attachment of L-aspartate to tRNA(Asp) in a two-step reaction: L-aspartate is first activated by ATP to form Asp-AMP and then transferred to the acceptor end of tRNA(Asp). The sequence is that of Aspartate--tRNA ligase from Streptococcus agalactiae serotype V (strain ATCC BAA-611 / 2603 V/R).